The chain runs to 437 residues: Histidinol dehydrogenase (437 aa).

3 residues coordinate NAD(+): Tyr-137, Gln-199, and Asn-222. Residues Ser-245, Gln-267, and His-270 each contribute to the substrate site. Positions 267 and 270 each coordinate Zn(2+). Active-site proton acceptor residues include Glu-335 and His-336. Positions 336, 369, 423, and 428 each coordinate substrate. A Zn(2+)-binding site is contributed by Asp-369. Residue His-428 coordinates Zn(2+).

It belongs to the histidinol dehydrogenase family. Zn(2+) is required as a cofactor.

The catalysed reaction is L-histidinol + 2 NAD(+) + H2O = L-histidine + 2 NADH + 3 H(+). The protein operates within amino-acid biosynthesis; L-histidine biosynthesis; L-histidine from 5-phospho-alpha-D-ribose 1-diphosphate: step 9/9. Catalyzes the sequential NAD-dependent oxidations of L-histidinol to L-histidinaldehyde and then to L-histidine. This is Histidinol dehydrogenase from Parasynechococcus marenigrum (strain WH8102).